The following is a 492-amino-acid chain: Probable cobyric acid synthase (492 aa).

Residues 252-444 enclose the GATase cobBQ-type domain; the sequence is PIEVNVVKFS…FHGILENFEF (193 aa). Residue cysteine 330 is the Nucleophile of the active site. Residue histidine 436 is part of the active site.

Belongs to the CobB/CobQ family. CobQ subfamily.

The protein operates within cofactor biosynthesis; adenosylcobalamin biosynthesis. Catalyzes amidations at positions B, D, E, and G on adenosylcobyrinic A,C-diamide. NH(2) groups are provided by glutamine, and one molecule of ATP is hydrogenolyzed for each amidation. In Methanococcus maripaludis (strain DSM 14266 / JCM 13030 / NBRC 101832 / S2 / LL), this protein is Probable cobyric acid synthase.